The following is a 317-amino-acid chain: Homoserine O-acetyltransferase (317 aa).

The active-site Acyl-thioester intermediate is cysteine 142. Residues lysine 163 and serine 192 each coordinate substrate. The active-site Proton acceptor is histidine 235. The active site involves glutamate 237. Arginine 249 provides a ligand contact to substrate.

The protein belongs to the MetA family.

Its subcellular location is the cytoplasm. It catalyses the reaction L-homoserine + acetyl-CoA = O-acetyl-L-homoserine + CoA. Its pathway is amino-acid biosynthesis; L-methionine biosynthesis via de novo pathway; O-acetyl-L-homoserine from L-homoserine: step 1/1. In terms of biological role, transfers an acetyl group from acetyl-CoA to L-homoserine, forming acetyl-L-homoserine. The protein is Homoserine O-acetyltransferase of Rhizorhabdus wittichii (strain DSM 6014 / CCUG 31198 / JCM 15750 / NBRC 105917 / EY 4224 / RW1) (Sphingomonas wittichii).